Reading from the N-terminus, the 605-residue chain is NADH-ubiquinone oxidoreductase chain 5 (605 aa).

16 consecutive transmembrane segments (helical) span residues 11-31 (ILIT…LPPI), 49-69 (LSLT…ISSL), 77-97 (LAMS…ALFI), 120-140 (MFLL…NFFP), 141-161 (MLVG…WWHG), 178-198 (LADI…SSLD), 202-222 (FFAT…MAAM), 244-264 (VSAL…LIGM), 273-295 (GFSE…KALL), 302-322 (IIAF…GLNH), 325-345 (LAFM…LCAG), 371-391 (ASCF…TGFF), 408-425 (LWAT…IYSL), 457-477 (LALA…PIYT), 488-508 (LAAL…ISLA), and 584-604 (IKTY…IMLF).

Belongs to the complex I subunit 5 family.

Its subcellular location is the mitochondrion inner membrane. The catalysed reaction is a ubiquinone + NADH + 5 H(+)(in) = a ubiquinol + NAD(+) + 4 H(+)(out). Its function is as follows. Core subunit of the mitochondrial membrane respiratory chain NADH dehydrogenase (Complex I) that is believed to belong to the minimal assembly required for catalysis. Complex I functions in the transfer of electrons from NADH to the respiratory chain. The immediate electron acceptor for the enzyme is believed to be ubiquinone. This Pelomedusa subrufa (African side-necked turtle) protein is NADH-ubiquinone oxidoreductase chain 5 (MT-ND5).